The primary structure comprises 275 residues: Acetyl-coenzyme A carboxylase carboxyl transferase subunit beta (275 aa).

The CoA carboxyltransferase N-terminal domain occupies 18 to 275; it reads KDNAGPAVPS…IHRLGGEMHA (258 aa). The disordered stretch occupies residues 23-47; sequence PAVPSNTHSSKSNGNPVSEMKENKR. Polar residues predominate over residues 26–38; sequence PSNTHSSKSNGNP.

The protein belongs to the AccD/PCCB family. Acetyl-CoA carboxylase is a heterohexamer composed of biotin carboxyl carrier protein (AccB), biotin carboxylase (AccC) and two subunits each of ACCase subunit alpha (AccA) and ACCase subunit beta (AccD).

It localises to the cytoplasm. The enzyme catalyses N(6)-carboxybiotinyl-L-lysyl-[protein] + acetyl-CoA = N(6)-biotinyl-L-lysyl-[protein] + malonyl-CoA. Its pathway is lipid metabolism; malonyl-CoA biosynthesis; malonyl-CoA from acetyl-CoA: step 1/1. Component of the acetyl coenzyme A carboxylase (ACC) complex. Biotin carboxylase (BC) catalyzes the carboxylation of biotin on its carrier protein (BCCP) and then the CO(2) group is transferred by the transcarboxylase to acetyl-CoA to form malonyl-CoA. This Alkaliphilus oremlandii (strain OhILAs) (Clostridium oremlandii (strain OhILAs)) protein is Acetyl-coenzyme A carboxylase carboxyl transferase subunit beta.